A 158-amino-acid polypeptide reads, in one-letter code: MTLKTIEGTFIAPKGKYALVVGRFNSFVVESLVSGAIDALVRHGVSESDITIIRAPGAFEIPLVTQKVAQRGEYAAIIALGAVIRGGTPHFEYVAGECTKGLAQVSMEYGVPVAFGVLTVDSIEQAIERSGTKAGNKGAEAALSALEMVSLLAQLEAK.

5-amino-6-(D-ribitylamino)uracil-binding positions include Phe24, 58-60, and 82-84; these read AFE and AVI. A (2S)-2-hydroxy-3-oxobutyl phosphate-binding site is contributed by 87 to 88; that stretch reads GT. His90 acts as the Proton donor in catalysis. Phe115 is a 5-amino-6-(D-ribitylamino)uracil binding site. A (2S)-2-hydroxy-3-oxobutyl phosphate-binding site is contributed by Arg129.

This sequence belongs to the DMRL synthase family. As to quaternary structure, forms an icosahedral capsid composed of 60 subunits, arranged as a dodecamer of pentamers.

The enzyme catalyses (2S)-2-hydroxy-3-oxobutyl phosphate + 5-amino-6-(D-ribitylamino)uracil = 6,7-dimethyl-8-(1-D-ribityl)lumazine + phosphate + 2 H2O + H(+). The protein operates within cofactor biosynthesis; riboflavin biosynthesis; riboflavin from 2-hydroxy-3-oxobutyl phosphate and 5-amino-6-(D-ribitylamino)uracil: step 1/2. Its function is as follows. Catalyzes the formation of 6,7-dimethyl-8-ribityllumazine by condensation of 5-amino-6-(D-ribitylamino)uracil with 3,4-dihydroxy-2-butanone 4-phosphate. This is the penultimate step in the biosynthesis of riboflavin. This Ectopseudomonas mendocina (strain ymp) (Pseudomonas mendocina) protein is 6,7-dimethyl-8-ribityllumazine synthase.